Here is an 825-residue protein sequence, read N- to C-terminus: Putative NAD(+)--arginine ADP-ribosyltransferase Mav (825 aa).

A disordered region spans residues 435-673 (ALKGLKKPPG…SGSDHHLPLH (239 aa)). Pro residues-rich tracts occupy residues 443-457 (PGVPKPPEVKPPAAP) and 468-491 (SGKPGPVAPSGKPAPGPADGPLPH). The segment covering 560–579 (PAADTPAPSAPAASMSAASG) has biased composition (low complexity). A compositionally biased stretch (pro residues) spans 580 to 589 (PPMPPTPSLP). The span at 590-599 (EPASLPSGPS) shows a compositional bias: low complexity. A TR mART core domain is found at 650-825 (KNANGHGPHD…GRTIIEMIER (176 aa)). A compositionally biased stretch (basic and acidic residues) spans 656–670 (GPHDASLDSGSDHHL). Residues 687–699 (TGPGYQELNFALR), 730–733 (RGTN), and glutamate 750 each bind NAD(+). Arginine 730 is an active-site residue. Catalysis depends on residues serine 755 and glutamate 795. Glutamate 795 contacts NAD(+).

It belongs to the Arg-specific ADP-ribosyltransferase family.

Its subcellular location is the secreted. It catalyses the reaction L-arginyl-[protein] + NAD(+) = N(omega)-(ADP-D-ribosyl)-L-arginyl-[protein] + nicotinamide + H(+). A probable mono(ADP-ribosyl)transferase, it may ADP-ribosylate Arg in target protein(s). The protein is Putative NAD(+)--arginine ADP-ribosyltransferase Mav of Mycobacterium avium (strain 104).